The following is a 619-amino-acid chain: DNA polymerase II small subunit (619 aa).

The tract at residues 78-122 (EEAEKTVESQETRASELEEGGVSQVSSGELQELKEESPEISTTEE) is disordered. Residues 79-93 (EAEKTVESQETRASE) are compositionally biased toward basic and acidic residues.

Belongs to the DNA polymerase delta/II small subunit family. As to quaternary structure, heterodimer of a large subunit and a small subunit.

It catalyses the reaction DNA(n) + a 2'-deoxyribonucleoside 5'-triphosphate = DNA(n+1) + diphosphate. The enzyme catalyses Exonucleolytic cleavage in the 3'- to 5'-direction to yield nucleoside 5'-phosphates.. Its function is as follows. Possesses two activities: a DNA synthesis (polymerase) and an exonucleolytic activity that degrades single-stranded DNA in the 3' to 5' direction. Has a template-primer preference which is characteristic of a replicative DNA polymerase. The chain is DNA polymerase II small subunit (polB) from Pyrococcus abyssi (strain GE5 / Orsay).